The sequence spans 2873 residues: WD repeat-containing protein 87 (2873 aa).

WD repeat units follow at residues Pro108–Gln146, Thr199–Ser239, Ala242–Glu283, Ser368–Lys407, Asn415–Lys460, Leu516–Ser553, and Leu565–Leu604. Disordered stretches follow at residues Phe1049–Thr1124, Asp1177–Ala1199, Glu1392–Val1413, Ser1531–Arg1607, and Lys2199–Asp2338. 2 stretches are compositionally biased toward basic residues: residues Val1089 to Lys1101 and Lys1187 to Lys1197. Basic and acidic residues predominate over residues Glu1549–Trp1574. A compositionally biased stretch (basic residues) spans Ala1575–Lys1586. Composition is skewed to basic and acidic residues over residues Lys1587–Arg1607 and Lys2204–Phe2213. The segment covering Ser2244 to Glu2276 has biased composition (acidic residues). Over residues Glu2277–Lys2287 the composition is skewed to basic and acidic residues. The segment covering Glu2304 to Val2337 has biased composition (acidic residues).

The sequence is that of WD repeat-containing protein 87 (WDR87) from Homo sapiens (Human).